A 204-amino-acid polypeptide reads, in one-letter code: CASP-like protein 2A1 (204 aa).

Residues 1 to 11 (MEKSNDHDKAS) show a composition bias toward basic and acidic residues. The disordered stretch occupies residues 1–25 (MEKSNDHDKASHGGSGGGATEKWEE). The Cytoplasmic portion of the chain corresponds to 1–32 (MEKSNDHDKASHGGSGGGATEKWEETSPGIRT). The helical transmembrane segment at 33–53 (AETMLRLAPVGLCVAALVVML) threads the bilayer. Over 54-74 (KDSETNEFGSISYSNLTAFRY) the chain is Extracellular. Asn68 carries an N-linked (GlcNAc...) asparagine glycan. Residues 75-95 (LVHANGICAGYSLLSAAIAAM) form a helical membrane-spanning segment. The Cytoplasmic segment spans residues 96–113 (PRSSSTMPRVWTFFCLDQ). Residues 114–134 (LLTYLVLAAGAVSAEVLYLAY) traverse the membrane as a helical segment. Residues 135–155 (NGDSAITWSDACSSYGGFCHR) lie on the Extracellular side of the membrane. The helical transmembrane segment at 156–176 (ATASVIITFFVVCFYILLSLI) threads the bilayer. The Cytoplasmic segment spans residues 177-204 (SSYKLFTRFDPPSIVDSDKTLEVAVFGS).

The protein belongs to the Casparian strip membrane proteins (CASP) family. Homodimer and heterodimers.

The protein localises to the cell membrane. The sequence is that of CASP-like protein 2A1 from Arabidopsis lyrata subsp. lyrata (Lyre-leaved rock-cress).